The chain runs to 360 residues: Phospho-N-acetylmuramoyl-pentapeptide-transferase (360 aa).

Helical transmembrane passes span 18 to 38 (VFSY…MMSL), 73 to 93 (TMGG…WADL), 97 to 117 (YVWA…VDDY), 135 to 155 (FWQS…STQA), 168 to 188 (VLPQ…VGTS), 199 to 219 (GLAI…AYLT), 236 to 256 (ASEL…FLWF), 263 to 283 (VFMG…IAVL), 288 to 308 (LLLI…ILQV), and 339 to 359 (IVRF…TLKI).

It belongs to the glycosyltransferase 4 family. MraY subfamily. Mg(2+) is required as a cofactor.

The protein resides in the cell inner membrane. The enzyme catalyses UDP-N-acetyl-alpha-D-muramoyl-L-alanyl-gamma-D-glutamyl-meso-2,6-diaminopimeloyl-D-alanyl-D-alanine + di-trans,octa-cis-undecaprenyl phosphate = di-trans,octa-cis-undecaprenyl diphospho-N-acetyl-alpha-D-muramoyl-L-alanyl-D-glutamyl-meso-2,6-diaminopimeloyl-D-alanyl-D-alanine + UMP. It functions in the pathway cell wall biogenesis; peptidoglycan biosynthesis. In terms of biological role, catalyzes the initial step of the lipid cycle reactions in the biosynthesis of the cell wall peptidoglycan: transfers peptidoglycan precursor phospho-MurNAc-pentapeptide from UDP-MurNAc-pentapeptide onto the lipid carrier undecaprenyl phosphate, yielding undecaprenyl-pyrophosphoryl-MurNAc-pentapeptide, known as lipid I. This chain is Phospho-N-acetylmuramoyl-pentapeptide-transferase, found in Pseudoalteromonas translucida (strain TAC 125).